The primary structure comprises 263 residues: Interleukin-15 receptor subunit alpha (263 aa).

A signal peptide spans 1–32 (MASPQLRGYGVQAIPVLLLLLLLLLLPLRVTP). Over 33–205 (GTTCPPPVSI…ISPHSSKMTK (173 aa)) the chain is Extracellular. The Sushi domain maps to 34 to 98 (TTCPPPVSIE…WTTPSLKCIR (65 aa)). 2 disulfides stabilise this stretch: C36–C78 and C62–C96. A glycan (N-linked (GlcNAc...) asparagine) is linked at N51. The span at 113-135 (TPKVTSQPESPSPSAKEPEAFSP) shows a compositional bias: low complexity. The interval 113-178 (TPKVTSQPES…HKSSRAPSLA (66 aa)) is disordered. The segment covering 136-145 (KSDTAMTTET) has biased composition (polar residues). Over residues 154–169 (TPSQTTSAGTTGTGSH) the composition is skewed to low complexity. Residues 206 to 226 (VAISTSVLLVGAGVVMAFLAW) traverse the membrane as a helical segment. Topologically, residues 227-263 (YIKSRQPSQPCRVEVETMETVPMTVRASSKEDEDTGA) are cytoplasmic.

In terms of assembly, the interleukin-15 receptor IL15R is a heterotrimer of IL15RA, IL2RB and IL2RG. IL15RA also self-associates. Interacts with SYK. In terms of processing, N-glycosylated and O-glycosylated. Post-translationally, a soluble form (sIL-15RA) arises from proteolytic shedding of the membrane-anchored receptor. It also binds IL15 and thus interferes with IL15 binding to the membrane receptor. Widely expressed.

The protein localises to the membrane. It is found in the nucleus membrane. Its subcellular location is the cell surface. The protein resides in the secreted. It localises to the extracellular space. In terms of biological role, high-affinity receptor for interleukin-15. Can signal both in cis and trans where IL15R from one subset of cells presents IL15 to neighboring IL2RG-expressing cells. In neutrophils, binds and activates kinase SYK in response to IL15 stimulation. In neutrophils, required for IL15-induced phagocytosis in a SYK-dependent manner. This is Interleukin-15 receptor subunit alpha (Il15ra) from Mus musculus (Mouse).